The sequence spans 343 residues: Single-pass membrane and coiled-coil domain-containing protein 2 (343 aa).

Positions 86-99 (EHDQDLSKQDKQET) are enriched in basic and acidic residues. The interval 86-108 (EHDQDLSKQDKQETDVDEDPQAS) is disordered. A coiled-coil region spans residues 152-238 (TEKIDNIIKK…SAKLRMYQME (87 aa)). The chain crosses the membrane as a helical span at residues 284–304 (IFIMFDVLTVTGLLCYILFFG).

The protein resides in the membrane. The chain is Single-pass membrane and coiled-coil domain-containing protein 2 (SMCO2) from Homo sapiens (Human).